The following is a 223-amino-acid chain: Ribonuclease T (223 aa).

The 175-residue stretch at 20–194 (VVIDVETAGF…YDTERTAELF (175 aa)) folds into the Exonuclease domain. 4 residues coordinate Mg(2+): Asp23, Glu25, His181, and Asp186. The active-site Proton donor/acceptor is the His181.

The protein belongs to the RNase T family. As to quaternary structure, homodimer. The cofactor is Mg(2+).

In terms of biological role, trims short 3' overhangs of a variety of RNA species, leaving a one or two nucleotide 3' overhang. Responsible for the end-turnover of tRNA: specifically removes the terminal AMP residue from uncharged tRNA (tRNA-C-C-A). Also appears to be involved in tRNA biosynthesis. The protein is Ribonuclease T of Shewanella baltica (strain OS155 / ATCC BAA-1091).